Here is a 407-residue protein sequence, read N- to C-terminus: Inhibin beta B chain (407 aa).

An N-terminal signal peptide occupies residues 1–28 (MDGLPGRALGAACLLLLAAGWLGPEAWG). The disordered stretch occupies residues 27-60 (WGSPTPPPSPAAPPPPPPPGALGGSQDTCTSCGG). A propeptide spanning residues 29–292 (SPTPPPSPAA…VDSRHRIRKR (264 aa)) is cleaved from the precursor. The span at 30 to 46 (PTPPPSPAAPPPPPPPG) shows a compositional bias: pro residues. Asn-93 carries an N-linked (GlcNAc...) asparagine glycan. Cystine bridges form between Cys-296-Cys-304, Cys-303-Cys-372, Cys-332-Cys-404, and Cys-336-Cys-406.

Belongs to the TGF-beta family. Dimeric, linked by one or more disulfide bonds. Inhibin B is a dimer of alpha and beta-B. Activin B is a homodimer of beta-B. Activin AB is a dimer of beta-A and beta-B. Interacts with FST and FSTL3.

Its subcellular location is the secreted. Its function is as follows. Inhibins and activins inhibit and activate, respectively, the secretion of follitropin by the pituitary gland. Inhibins/activins are involved in regulating a number of diverse functions such as hypothalamic and pituitary hormone secretion, gonadal hormone secretion, germ cell development and maturation, erythroid differentiation, insulin secretion, nerve cell survival, embryonic axial development or bone growth, depending on their subunit composition. Inhibins appear to oppose the functions of activins. In terms of biological role, activin B is a dimer of alpha and beta-B that plays a role in several essential biological processes including embryonic development, stem cell maintenance and differentiation, haematopoiesis, cell proliferation and wound healing. Signals through type I receptor ACVR1C, abundantly expressed in pancreatic beta cells, and type II receptors like ACVR2A. Upon ligand binding, these receptors phosphorylate intracellular signaling mediators SMAD2 and SMAD3, which form a complex with SMAD4, translocate to the nucleus, and regulate gene expression. Plays a crucial role in the induction of hepcidin by inflammation through activation of ACVR1C and subsequent phosphorylation of SMAD1/5/8. Regulates adipocyte lipid metabolism by decreasing non-esterified fatty acids and glycerol release and increases intracellular triglyceride content. Stimulates wound healing by promoting cell migration and hair follicle regeneration through the JNK and ERK signaling pathways downstream of RHOA. Functionally, inhibin B is a dimer of alpha and beta-B that plays a crucial role in the regulation of the reproductive system by inhibiting the secretion of follicle-stimulating hormone (FSH) from the anterior pituitary gland. Thereby, maintains reproductive homeostasis in both males and females. Acts as a more potent suppressor of FSH release than inhibin A. Functions as competitive receptor antagonist binding activin type II receptors with high affinity in the presence of the TGF-beta type III coreceptor/TGFBR3L. This chain is Inhibin beta B chain (INHBB), found in Sus scrofa (Pig).